A 221-amino-acid chain; its full sequence is Chalcone--flavanone isomerase (221 aa).

The substrate site is built by T47, N112, and S189.

Belongs to the chalcone isomerase family.

The catalysed reaction is a chalcone = a flavanone.. The protein operates within secondary metabolite biosynthesis; flavonoid biosynthesis. In terms of biological role, catalyzes the intramolecular cyclization of bicyclic chalcones into tricyclic (S)-flavanones. Responsible for the isomerization of 4,2',4',6'-tetrahydroxychalcone (also termed chalcone) into naringenin. The sequence is that of Chalcone--flavanone isomerase (CHI) from Dianthus caryophyllus (Carnation).